A 484-amino-acid polypeptide reads, in one-letter code: Sialidase-4 (484 aa).

The FRIP motif signature appears at 22–25 (YRVP). Arginine 23 and arginine 43 together coordinate substrate. Residues aspartate 47 and aspartate 48 each act as proton acceptor in the active site. The stretch at 127-138 (VASRDAGLSWGS) is one BNR 1 repeat. The substrate site is built by tyrosine 177 and tyrosine 179. The stretch at 200-211 (FYSDDHGRTWRC) is one BNR 2 repeat. The substrate site is built by glutamate 222 and arginine 242. A BNR 3 repeat occupies 251–262 (ALSTDEGTSFLP). The disordered stretch occupies residues 284-357 (PAPAPNRPRD…GPRPGVSGDV (74 aa)). Low complexity predominate over residues 336 to 345 (RLQPRGDGPR). Substrate is bound at residue arginine 389. Tyrosine 419 serves as the catalytic Nucleophile. Residue glutamate 440 is part of the active site.

Belongs to the glycosyl hydrolase 33 family. N-glycosylated. As to expression, predominant form in liver. Also expressed in brain, kidney and colon. Highly expressed in brain and at lower levels in kidney and liver.

It is found in the cell membrane. The protein resides in the endoplasmic reticulum membrane. Its subcellular location is the microsome membrane. The protein localises to the mitochondrion membrane. It localises to the cell projection. It is found in the neuron projection. The protein resides in the mitochondrion inner membrane. Its subcellular location is the mitochondrion outer membrane. The protein localises to the lysosome lumen. It carries out the reaction Hydrolysis of alpha-(2-&gt;3)-, alpha-(2-&gt;6)-, alpha-(2-&gt;8)- glycosidic linkages of terminal sialic acid residues in oligosaccharides, glycoproteins, glycolipids, colominic acid and synthetic substrates.. It catalyses the reaction a ganglioside GM3 + H2O = a beta-D-galactosyl-(1-&gt;4)-beta-D-glucosyl-(1&lt;-&gt;1)-ceramide + N-acetylneuraminate. The catalysed reaction is a ganglioside GM3 (d18:1(4E)) + H2O = a beta-D-Gal-(1-&gt;4)-beta-D-Glc-(1&lt;-&gt;1)-Cer(d18:1(4E)) + N-acetylneuraminate. The enzyme catalyses a ganglioside GM2 + H2O = a ganglioside GA2 + N-acetylneuraminate. It carries out the reaction a ganglioside GM2 (d18:1(4E)) + H2O = a ganglioside GA2 (d18:1(4E)) + N-acetylneuraminate. It catalyses the reaction a ganglioside GD1a + H2O = a ganglioside GM1 + N-acetylneuraminate. The catalysed reaction is a ganglioside GD1a (d18:1(4E)) + H2O = a ganglioside GM1 (d18:1(4E)) + N-acetylneuraminate. The enzyme catalyses a ganglioside GD3 + H2O = a ganglioside GM3 + N-acetylneuraminate. It carries out the reaction a ganglioside GD3 (d18:1(4E)) + H2O = a ganglioside GM3 (d18:1(4E)) + N-acetylneuraminate. Exo-alpha-sialidase that catalyzes the hydrolytic cleavage of the terminal sialic acid (N-acetylneuraminic acid, Neu5Ac) of a glycan moiety in the catabolism of glycolipids, glycoproteins and oligosacharides. Efficiently hydrolyzes gangliosides including alpha-(2-&gt;3)-sialylated GD1a and GM3 and alpha-(2-&gt;8)-sialylated GD3. Hydrolyzes poly-alpha-(2-&gt;8)-sialylated neural cell adhesion molecule NCAM1 likely at growth cones, suppressing neurite outgrowth in hippocampal neurons. May desialylate sialyl Lewis A and X antigens at the cell surface, down-regulating these glycan epitopes recognized by SELE/E selectin in the initiation of cell adhesion and extravasation. Has sialidase activity toward mucin, fetuin and sialyllactose. The polypeptide is Sialidase-4 (NEU4) (Homo sapiens (Human)).